An 814-amino-acid chain; its full sequence is Rho GTPase-activating protein 44 (814 aa).

The region spanning 14–249 is the BAR domain; sequence QTVGRAEKTE…IKAQQEAWVE (236 aa). In terms of domain architecture, Rho-GAP spans 255 to 445; that stretch reads KPLEEHLMIS…PIIQHADWFF (191 aa). Disordered stretches follow at residues 467–493, 528–769, and 784–814; these read ANYS…RPLS, RGSS…MSTD, and STLR…STAL. Over residues 479–489 the composition is skewed to basic and acidic residues; it reads PADRRQPEQAR. A Phosphoserine modification is found at Ser-493. Composition is skewed to low complexity over residues 567-581, 598-612, 622-637, 684-704, and 741-752; these read SPAT…SGAS, SPGS…SIQG, PQPA…DQSP, SPYG…LSPA, and SVSLSASSPQST. The tract at residues 727 to 814 is interaction with BST2; the sequence is KPRQRPTLPP…SEEESESTAL (88 aa). Positions 790 to 805 are enriched in basic and acidic residues; it reads PLEHARRHSATDKRDS. Ser-805 carries the post-translational modification Phosphoserine. Residues 811 to 814 carry the PDZ-binding motif; that stretch reads STAL.

Interacts with BST2 (via cytoplasmic domain). Interacts (probably via PDZ-binding motif) with SHANK3 (via PDZ domain); the interaction takes place in dendritic spines and promotes GRIA1 exocytosis. In terms of tissue distribution, specifically expressed in brain (at protein level). Detected in olfactory bulb, cortex, hippocampus, diencephalon and cerebellum (at protein level). Expressed in hippocampal neurons (at protein level).

Its subcellular location is the cell projection. It is found in the dendritic spine. It localises to the recycling endosome. The protein resides in the presynapse. The protein localises to the dendrite. Functionally, GTPase-activating protein (GAP) that stimulates the GTPase activity of Rho-type GTPases. Thereby, controls Rho-type GTPases cycling between their active GTP-bound and inactive GDP-bound states. Acts as a GAP at least for CDC42 and RAC1. In neurons, is involved in dendritic spine formation and synaptic plasticity in a specific RAC1-GAP activity. Limits the initiation of exploratory dendritic filopodia. Recruited to actin-patches that seed filopodia, binds specifically to plasma membrane sections that are deformed inward by acto-myosin mediated contractile forces. Acts through GAP activity on RAC1 to reduce actin polymerization necessary for filopodia formation. In association with SHANK3, promotes GRIA1 exocytosis from recycling endosomes and spine morphological changes associated to long-term potentiation. In Mus musculus (Mouse), this protein is Rho GTPase-activating protein 44.